The chain runs to 188 residues: Elongation factor P-like protein (188 aa).

Belongs to the elongation factor P family.

The chain is Elongation factor P-like protein from Xanthomonas axonopodis pv. citri (strain 306).